The sequence spans 382 residues: Carbamoyl phosphate synthase small chain (382 aa).

A CPSase region spans residues 1-189 (MIKSALLVLE…ELPAAKNESE (189 aa)). L-glutamine is bound by residues S47, G241, and G243. The region spanning 193–380 (HVVAYDYGVK…IDLIQTYRSS (188 aa)) is the Glutamine amidotransferase type-1 domain. Residue C269 is the Nucleophile of the active site. Residues L270, Q273, N311, G313, and F314 each contribute to the L-glutamine site. Catalysis depends on residues H353 and E355.

Belongs to the CarA family. As to quaternary structure, composed of two chains; the small (or glutamine) chain promotes the hydrolysis of glutamine to ammonia, which is used by the large (or ammonia) chain to synthesize carbamoyl phosphate. Tetramer of heterodimers (alpha,beta)4.

The catalysed reaction is hydrogencarbonate + L-glutamine + 2 ATP + H2O = carbamoyl phosphate + L-glutamate + 2 ADP + phosphate + 2 H(+). The enzyme catalyses L-glutamine + H2O = L-glutamate + NH4(+). Its pathway is amino-acid biosynthesis; L-arginine biosynthesis; carbamoyl phosphate from bicarbonate: step 1/1. It functions in the pathway pyrimidine metabolism; UMP biosynthesis via de novo pathway; (S)-dihydroorotate from bicarbonate: step 1/3. Small subunit of the glutamine-dependent carbamoyl phosphate synthetase (CPSase). CPSase catalyzes the formation of carbamoyl phosphate from the ammonia moiety of glutamine, carbonate, and phosphate donated by ATP, constituting the first step of 2 biosynthetic pathways, one leading to arginine and/or urea and the other to pyrimidine nucleotides. The small subunit (glutamine amidotransferase) binds and cleaves glutamine to supply the large subunit with the substrate ammonia. The chain is Carbamoyl phosphate synthase small chain from Pectobacterium atrosepticum (strain SCRI 1043 / ATCC BAA-672) (Erwinia carotovora subsp. atroseptica).